We begin with the raw amino-acid sequence, 421 residues long: Imidazolonepropionase (421 aa).

Positions 80 and 82 each coordinate Fe(3+). Histidine 80 and histidine 82 together coordinate Zn(2+). Residues arginine 89, tyrosine 152, and histidine 185 each coordinate 4-imidazolone-5-propanoate. Residue tyrosine 152 coordinates N-formimidoyl-L-glutamate. Residue histidine 249 participates in Fe(3+) binding. Zn(2+) is bound at residue histidine 249. A 4-imidazolone-5-propanoate-binding site is contributed by glutamate 252. Aspartate 324 is a binding site for Fe(3+). Aspartate 324 is a binding site for Zn(2+). Positions 326 and 328 each coordinate N-formimidoyl-L-glutamate. Serine 329 serves as a coordination point for 4-imidazolone-5-propanoate.

This sequence belongs to the metallo-dependent hydrolases superfamily. HutI family. Zn(2+) serves as cofactor. Requires Fe(3+) as cofactor.

Its subcellular location is the cytoplasm. It catalyses the reaction 4-imidazolone-5-propanoate + H2O = N-formimidoyl-L-glutamate. The protein operates within amino-acid degradation; L-histidine degradation into L-glutamate; N-formimidoyl-L-glutamate from L-histidine: step 3/3. Functionally, catalyzes the hydrolytic cleavage of the carbon-nitrogen bond in imidazolone-5-propanoate to yield N-formimidoyl-L-glutamate. It is the third step in the universal histidine degradation pathway. The sequence is that of Imidazolonepropionase from Bacillus velezensis (strain DSM 23117 / BGSC 10A6 / LMG 26770 / FZB42) (Bacillus amyloliquefaciens subsp. plantarum).